The sequence spans 190 residues: Vascular endothelial growth factor A (190 aa).

Positions 1–26 (MNFLLSWVHWTLALLLYLHHAKWSQA) are cleaved as a signal peptide. Disulfide bonds link Cys51–Cys93, Cys82–Cys127, and Cys86–Cys129. The N-linked (GlcNAc...) asparagine glycan is linked to Asn100.

Belongs to the PDGF/VEGF growth factor family. In terms of assembly, homodimer; disulfide-linked. Also found as heterodimer with PGF. Interacts with NRP1. Interacts with isoform 2 of BSG. Interacts with CD82; this interaction inhibits VEGFA-mediated signaling pathway.

It localises to the secreted. Its function is as follows. Growth factor active in angiogenesis, vasculogenesis and endothelial cell growth. Induces endothelial cell proliferation, promotes cell migration, inhibits apoptosis and induces permeabilization of blood vessels. Binds to the FLT1/VEGFR1 and KDR/VEGFR2 receptors, heparan sulfate and heparin. Binding to NRP1 receptor initiates a signaling pathway needed for motor neuron axon guidance and cell body migration, including for the caudal migration of facial motor neurons from rhombomere 4 to rhombomere 6 during embryonic development. Also binds the DEAR/FBXW7-AS1 receptor. This Mesocricetus auratus (Golden hamster) protein is Vascular endothelial growth factor A (VEGFA).